The following is a 112-amino-acid chain: UPF0122 protein CPR_1686 (112 aa).

The protein belongs to the UPF0122 family.

Functionally, might take part in the signal recognition particle (SRP) pathway. This is inferred from the conservation of its genetic proximity to ftsY/ffh. May be a regulatory protein. This Clostridium perfringens (strain SM101 / Type A) protein is UPF0122 protein CPR_1686.